The chain runs to 736 residues: 1,4-alpha-glucan branching enzyme GlgB (736 aa).

The active-site Nucleophile is aspartate 415. The Proton donor role is filled by glutamate 470.

This sequence belongs to the glycosyl hydrolase 13 family. GlgB subfamily. In terms of assembly, monomer.

The enzyme catalyses Transfers a segment of a (1-&gt;4)-alpha-D-glucan chain to a primary hydroxy group in a similar glucan chain.. It participates in glycan biosynthesis; glycogen biosynthesis. In terms of biological role, catalyzes the formation of the alpha-1,6-glucosidic linkages in glycogen by scission of a 1,4-alpha-linked oligosaccharide from growing alpha-1,4-glucan chains and the subsequent attachment of the oligosaccharide to the alpha-1,6 position. In Burkholderia cenocepacia (strain HI2424), this protein is 1,4-alpha-glucan branching enzyme GlgB.